The primary structure comprises 732 residues: Catalase-peroxidase (732 aa).

The disordered stretch occupies residues 1–20; that stretch reads MDKDSKRPVVGSTVRGGMSN. The tryptophyl-tyrosyl-methioninium (Trp-Tyr) (with M-246) cross-link spans 92 to 220; it reads WHSAGTYRMG…LAAVQMGLIY (129 aa). The active-site Proton acceptor is His93. The tryptophyl-tyrosyl-methioninium (Tyr-Met) (with W-92) cross-link spans 220–246; sequence YVNPEGPDGNPDPVAAGYDVIETFARM. Heme b is bound at residue His261.

The protein belongs to the peroxidase family. Peroxidase/catalase subfamily. In terms of assembly, homodimer or homotetramer. Requires heme b as cofactor. Post-translationally, formation of the three residue Trp-Tyr-Met cross-link is important for the catalase, but not the peroxidase activity of the enzyme.

It carries out the reaction H2O2 + AH2 = A + 2 H2O. The catalysed reaction is 2 H2O2 = O2 + 2 H2O. Its function is as follows. Bifunctional enzyme with both catalase and broad-spectrum peroxidase activity. The polypeptide is Catalase-peroxidase (Desulfosudis oleivorans (strain DSM 6200 / JCM 39069 / Hxd3) (Desulfococcus oleovorans)).